The primary structure comprises 854 residues: Lysine-specific demethylase 3 (854 aa).

The tract at residues 64-88 is disordered; sequence QRVQQEEESLGQVPPLTEEEQQRHD. The 206-residue stretch at 601–806 folds into the JmjC domain; sequence LRTGNLNIAS…HCYHLTHEFR (206 aa). 3 residues coordinate Fe cation: histidine 643, aspartate 645, and histidine 774.

This sequence belongs to the JHDM2-like histone demethylase family. Fe(2+) is required as a cofactor. In terms of tissue distribution, expressed in neurons close to the dorsal lateral neurons involved in circadian rhythm.

It localises to the nucleus. It is found in the cytoplasm. The catalysed reaction is N(6),N(6)-dimethyl-L-lysyl(9)-[histone H3] + 2 2-oxoglutarate + 2 O2 = L-lysyl(9)-[histone H3] + 2 formaldehyde + 2 succinate + 2 CO2. Histone demethylase that specifically demethylates 'Lys-10' of histone H3 (H3K9), thereby playing a central role in histone code. Demethylation of Lys residue generates formaldehyde and succinate. Probably involved in regulation of chromatin structure, promoting expansion of euchromatin. Negatively regulates rhino-dependent piRNA production capacity of several genomic regions; may help define the frontiers of piRNA clusters by regulating histone methylation levels. May be involved in regulation of behavior and circadian rhythms. The polypeptide is Lysine-specific demethylase 3 (Drosophila melanogaster (Fruit fly)).